The sequence spans 1190 residues: Phosphatidylinositol-3,5-bisphosphate 3-phosphatase MTMR4 (1190 aa).

Position 8 is a phosphoserine (serine 8). In terms of domain architecture, Myotubularin phosphatase spans glutamate 153 to tyrosine 570. 3 residues coordinate a 1,2-diacyl-sn-glycero-3-phospho-(1D-myo-inositol-3,5-bisphosphate): asparagine 320, asparagine 345, and isoleucine 346. Residues asparagine 320, asparagine 345, and isoleucine 346 each coordinate a 1,2-diacyl-sn-glycero-3-phospho-(1D-myo-inositol-3-phosphate). Catalysis depends on cysteine 407, which acts as the Phosphocysteine intermediate. A 1,2-diacyl-sn-glycero-3-phospho-(1D-myo-inositol-3,5-bisphosphate) contacts are provided by serine 408, aspartate 409, glycine 410, tryptophan 411, aspartate 412, arginine 413, lysine 449, and arginine 453. A 1,2-diacyl-sn-glycero-3-phospho-(1D-myo-inositol-3-phosphate) contacts are provided by serine 408, aspartate 409, glycine 410, tryptophan 411, aspartate 412, and arginine 413. Arginine 453 is a binding site for a 1,2-diacyl-sn-glycero-3-phospho-(1D-myo-inositol-3-phosphate). A phosphoserine mark is found at serine 610 and serine 629. 3 disordered regions span residues serine 616–histidine 694, glutamate 724–proline 749, and aspartate 773–valine 848. Residues cysteine 618–serine 637 are compositionally biased toward polar residues. Residues leucine 782–serine 847 show a composition bias toward polar residues. The PY-motif; substrate motif for NEDD4 signature appears at valine 999–tyrosine 1003. The stretch at leucine 1020–alanine 1052 forms a coiled coil. The segment at aspartate 1109–glutamine 1169 adopts an FYVE-type zinc-finger fold. Positions 1115, 1118, 1131, 1134, 1139, 1142, 1161, and 1164 each coordinate Zn(2+).

This sequence belongs to the protein-tyrosine phosphatase family. Non-receptor class myotubularin subfamily. As to quaternary structure, homooligomeric. Forms MTMR3:MTMR4 heterooligomers; regulates the localization of both proteins. The MTMR3:MTMR4 heterooligomer can also recruit both CEP55 and PLK1; occurs during early mitosis, regulates the phosphorylation of CEP55 by PLK1 and its recruitment to the midbody where it can mediate cell abscission. Interacts with SMAD2 and SMAD3; negatively regulates TGF-beta signaling through SMAD2 and SMAD3 dephosphorylation and retention in endosomes. Interacts with SMAD1; negatively regulates BMP signaling through SMAD1 dephosphorylation and retention in endosomes. In terms of processing, ubiquitinated. Ubiquitination by NEDD4 probably leads to proteasomal degradation. Phosphorylated by CDK1 during mitosis.

It is found in the early endosome membrane. The protein localises to the recycling endosome membrane. It localises to the late endosome membrane. The protein resides in the cytoplasmic vesicle. Its subcellular location is the phagosome membrane. It carries out the reaction a 1,2-diacyl-sn-glycero-3-phospho-(1D-myo-inositol-3-phosphate) + H2O = a 1,2-diacyl-sn-glycero-3-phospho-(1D-myo-inositol) + phosphate. The catalysed reaction is a 1,2-diacyl-sn-glycero-3-phospho-(1D-myo-inositol-3,5-bisphosphate) + H2O = a 1,2-diacyl-sn-glycero-3-phospho-(1D-myo-inositol-5-phosphate) + phosphate. The enzyme catalyses 1,2-dioctanoyl-sn-glycero-3-phospho-(1-D-myo-inositol-3-phosphate) + H2O = 1,2-dioctanoyl-sn-glycero-3-phospho-(1D-myo-inositol) + phosphate. It catalyses the reaction 1,2-dioctanoyl-sn-glycero-3-phospho-(1D-myo-inositol-3,5-bisphosphate) + H2O = 1,2-dioctanoyl-sn-glycero-3-phospho-(1D-myo-inositol-5-phosphate) + phosphate. Lipid phosphatase that specifically dephosphorylates the D-3 position of phosphatidylinositol 3-phosphate and phosphatidylinositol 3,5-bisphosphate, generating phosphatidylinositol and phosphatidylinositol 5-phosphate. Decreases the levels of phosphatidylinositol 3-phosphate, a phospholipid found in cell membranes where it acts as key regulator of both cell signaling and intracellular membrane traffic, in a subset of endosomal membranes to negatively regulate both endocytic recycling and trafficking and/or maturation of endosomes toward lysosomes. Through phosphatidylinositol 3-phosphate turnover in phagosome membranes regulates phagocytosis and phagosome maturation. By decreasing phosphatidylinositol 3-monophosphate (PI3P) levels in immune cells it can also regulate the innate immune response. Beside its lipid phosphatase activity, can also function as a molecular adapter to regulate midbody abscission during mitotic cytokinesis. Can also negatively regulate TGF-beta and BMP signaling through Smad proteins dephosphorylation and retention in endosomes. The protein is Phosphatidylinositol-3,5-bisphosphate 3-phosphatase MTMR4 of Mus musculus (Mouse).